The following is a 417-amino-acid chain: Neuropeptide FF receptor 2 (417 aa).

At 1 to 45 (MGKRWDSNSSGSWDHIWSGNDTQHPWYSDINITYMNYYLHQPHVT) the chain is on the extracellular side. N-linked (GlcNAc...) asparagine glycosylation is found at Asn8, Asn20, and Asn31. A helical membrane pass occupies residues 46-66 (AVFISSYFLIFFLCMVGNTVV). Residues 67 to 82 (CFVVIRNRYMHTVTNF) are Cytoplasmic-facing. A helical membrane pass occupies residues 83-103 (FIFNLAISDLLVGIFCMPITL). Residues 104–119 (LDNIIAGWPFGSSMCK) are Extracellular-facing. Cys118 and Cys206 are joined by a disulfide. Residues 120 to 140 (ISGLVQGISVAASVFTLVAIA) traverse the membrane as a helical segment. Over 141–160 (VDRFRCVVYPFKPKLTVKTA) the chain is Cytoplasmic. The helical transmembrane segment at 161 to 181 (FVMIVIIWGLAITIMTPSAIM) threads the bilayer. Residues 182–217 (LHVQEEKYYRVRLSSHNKTSTVYWCREDWPNQEMRR) lie on the Extracellular side of the membrane. The N-linked (GlcNAc...) asparagine glycan is linked to Asn198. Residues 218-238 (IYTTVLFATIYLAPLSLIVIM) form a helical membrane-spanning segment. At 239–274 (YARIGASLFKTSAHSTGKQRLEQWHVSKKKQKVIKM) the chain is on the cytoplasmic side. A helical transmembrane segment spans residues 275–295 (LLTVALLFILSWLPLWTLMML). At 296–310 (SDYADLSPNKLRVIN) the chain is on the extracellular side. Residues 311–331 (IYVYPFAHWLAFCNSSVNPII) traverse the membrane as a helical segment. Topologically, residues 332-417 (YGFFNENFRS…TGEATNSTET (86 aa)) are cytoplasmic. Residues 378–417 (HEPASQNPSGENLGCRKSADNPTQESLMEETGEATNSTET) are disordered.

Belongs to the G-protein coupled receptor 1 family.

It localises to the cell membrane. Functionally, receptor for NPAF (A-18-F-amide) and NPFF (F-8-F-amide) neuropeptides, also known as morphine-modulating peptides. Can also be activated by a variety of naturally occurring or synthetic FMRF-amide like ligands. This receptor mediates its action by association with G proteins that activate a phosphatidylinositol-calcium second messenger system. This Rattus norvegicus (Rat) protein is Neuropeptide FF receptor 2 (Npffr2).